The primary structure comprises 166 residues: Large ribosomal subunit protein uL10 (166 aa).

It belongs to the universal ribosomal protein uL10 family. As to quaternary structure, part of the ribosomal stalk of the 50S ribosomal subunit. The N-terminus interacts with L11 and the large rRNA to form the base of the stalk. The C-terminus forms an elongated spine to which L12 dimers bind in a sequential fashion forming a multimeric L10(L12)X complex.

Forms part of the ribosomal stalk, playing a central role in the interaction of the ribosome with GTP-bound translation factors. The polypeptide is Large ribosomal subunit protein uL10 (Hydrogenovibrio crunogenus (strain DSM 25203 / XCL-2) (Thiomicrospira crunogena)).